A 214-amino-acid chain; its full sequence is MNTLQKGFTLIELMIVIAIVGILAAVALPAYQDYTARAQVSEAILLAEGQKSAVTEYYLNHGIWPENNPAGVASPASDIKGKYVQSVTVANGVVTAQMKSDGVNKEIKNKKLSLWARREAGSVKWFCGQPVTRDNAGTDAVTADTTGKDKEIDTKHLPSTCRCFQIGSVKWFCGQPVTRDNAGTDAVTADTTGKDKEIDTKHLPSTCRDKSSAE.

The propeptide at 1-7 is leader sequence; the sequence is MNTLQKG. At Phe8 the chain carries N-methylphenylalanine. Residues 8–28 traverse the membrane as a helical segment; sequence FTLIELMIVIAIVGILAAVAL. Residues Cys127 and Cys161 are joined by a disulfide bond. The disordered stretch occupies residues 182–214; that stretch reads AGTDAVTADTTGKDKEIDTKHLPSTCRDKSSAE. Residues 192-214 show a composition bias toward basic and acidic residues; it reads TGKDKEIDTKHLPSTCRDKSSAE.

The protein belongs to the N-Me-Phe pilin family. The pili are polar flexible filaments of about 5.4 nanometers diameter and 2.5 micrometers average length; they consist of only a single polypeptide chain arranged in a helical configuration of five subunits per turn in the assembled pilus.

The protein localises to the fimbrium. Its subcellular location is the membrane. Major component of the type IV pilus (T4P) that plays a role in cellular adherence, microcolony formation, resistance to neutrophil mediated killing, twitching motility as well as transformation. Mediates the attachment and the formation of bacterial microcolonies on host epithelial cells. Mechanistically, pili retractation induces host NF-kappa-B activation in infected cells, which is temporally associated with the formation of gonococcal microcolonies. In Neisseria gonorrhoeae, this protein is Type IV major pilin protein PilE1 (pilE1).